The chain runs to 418 residues: Tyrosine--tRNA ligase (418 aa).

Tyrosine 34 contacts L-tyrosine. Positions 39–48 match the 'HIGH' region motif; sequence PTADSLHLGH. Residues tyrosine 169 and glutamine 173 each coordinate L-tyrosine. Residues 229-233 carry the 'KMSKS' region motif; it reads KFGKS. ATP is bound at residue lysine 232. An S4 RNA-binding domain is found at 352-418; the sequence is LNIVDLLVTA…GKKKYFVLTY (67 aa).

It belongs to the class-I aminoacyl-tRNA synthetase family. TyrS type 1 subfamily. As to quaternary structure, homodimer.

The protein localises to the cytoplasm. It carries out the reaction tRNA(Tyr) + L-tyrosine + ATP = L-tyrosyl-tRNA(Tyr) + AMP + diphosphate + H(+). Its function is as follows. Catalyzes the attachment of tyrosine to tRNA(Tyr) in a two-step reaction: tyrosine is first activated by ATP to form Tyr-AMP and then transferred to the acceptor end of tRNA(Tyr). This is Tyrosine--tRNA ligase from Streptococcus gordonii (strain Challis / ATCC 35105 / BCRC 15272 / CH1 / DL1 / V288).